Here is a 716-residue protein sequence, read N- to C-terminus: Translation initiation factor IF-2 (716 aa).

Positions 52 to 135 (QQESNNNTKQ…PAAEPKEMPS (84 aa)) are disordered. Residues 56-125 (NNNTKQNTQN…KNNKGNKNNK (70 aa)) show a composition bias toward low complexity. The tr-type G domain maps to 218-387 (ERPAVVTIMG…GLVAEVQELK (170 aa)). The G1 stretch occupies residues 227–234 (GHVDHGKT). A GTP-binding site is contributed by 227-234 (GHVDHGKT). The segment at 252 to 256 (GITQH) is G2. Positions 273-276 (DTPG) are G3. GTP contacts are provided by residues 273–277 (DTPGH) and 327–330 (NKID). Residues 327 to 330 (NKID) are G4. Residues 363-365 (SAL) form a G5 region.

This sequence belongs to the TRAFAC class translation factor GTPase superfamily. Classic translation factor GTPase family. IF-2 subfamily.

It is found in the cytoplasm. Functionally, one of the essential components for the initiation of protein synthesis. Protects formylmethionyl-tRNA from spontaneous hydrolysis and promotes its binding to the 30S ribosomal subunits. Also involved in the hydrolysis of GTP during the formation of the 70S ribosomal complex. This Staphylococcus haemolyticus (strain JCSC1435) protein is Translation initiation factor IF-2.